The following is a 1591-amino-acid chain: Dicer-like protein 1 (1591 aa).

2 stretches are compositionally biased toward basic and acidic residues: residues Met-1–Asp-20 and Ser-41–Ala-52. The interval Met-1–Ala-52 is disordered. In terms of domain architecture, Helicase ATP-binding spans Leu-115–Glu-298. Leu-128–Thr-135 contacts ATP. Residues Asp-242–His-245 carry the DEAH box motif. A Helicase C-terminal domain is found at Lys-439–Met-607. A Dicer dsRNA-binding fold domain is found at Ser-639–Ala-729. Residues Thr-888 to Gln-1012 form the PAZ domain. 2 RNase III domains span residues Ile-1050–Gln-1190 and Cys-1243–Gly-1406. Mg(2+)-binding residues include Glu-1283, Asp-1392, and Glu-1395. A DRBM domain is found at Thr-1440–Asp-1514. Zn(2+)-binding residues include Cys-1452, His-1485, Cys-1526, and Cys-1528.

It belongs to the helicase family. Dicer subfamily. Mg(2+) serves as cofactor. Requires Mn(2+) as cofactor.

In terms of biological role, dicer-like endonuclease which seems not to be involved in cleaving double-stranded RNA in the RNA interference (RNAi) pathway, contrary to its DCL2 counterpart. The polypeptide is Dicer-like protein 1 (DCL1) (Pyricularia oryzae (strain 70-15 / ATCC MYA-4617 / FGSC 8958) (Rice blast fungus)).